The following is a 188-amino-acid chain: Elongation factor P (188 aa).

The protein belongs to the elongation factor P family.

It localises to the cytoplasm. The protein operates within protein biosynthesis; polypeptide chain elongation. In terms of biological role, involved in peptide bond synthesis. Stimulates efficient translation and peptide-bond synthesis on native or reconstituted 70S ribosomes in vitro. Probably functions indirectly by altering the affinity of the ribosome for aminoacyl-tRNA, thus increasing their reactivity as acceptors for peptidyl transferase. This is Elongation factor P from Leptospira biflexa serovar Patoc (strain Patoc 1 / Ames).